The following is an 84-amino-acid chain: GTP cyclohydrolase 1 feedback regulatory protein (84 aa).

The protein belongs to the GFRP family. Homopentamer. Forms a complex with GCH1 where a GCH1 homodecamer is sandwiched by two GFRP homopentamers.

The protein localises to the nucleus. It is found in the nucleus membrane. It localises to the cytoplasm. Its subcellular location is the cytosol. Functionally, mediates tetrahydrobiopterin inhibition of GTP cyclohydrolase 1. The sequence is that of GTP cyclohydrolase 1 feedback regulatory protein (gchfr) from Xenopus laevis (African clawed frog).